The following is a 204-amino-acid chain: Endothelin-3 (204 aa).

Residues 1–17 (MELRLWFLFGLTVTSAA) form the signal peptide. Residues 18-71 (GPVPRPQPGDAGRSGVPRAPSATKETMAMVATRGPSPRSSGQEQEPGPFGELAA) form a disordered region. Positions 18 to 80 (GPVPRPQPGD…AKGGPVRYRA (63 aa)) are excised as a propeptide. Disulfide bonds link C83–C97 and C85–C93. Positions 104–204 (INTPERTVPY…KSRTDKARRL (101 aa)) are excised as a propeptide. The interval 115 to 140 (LSNHRGSVRGRRSAGPSPQSSQPSRG) is disordered. Residues 127 to 140 (SAGPSPQSSQPSRG) show a composition bias toward low complexity. The segment at 144–158 (CACAESQDRACVYFC) is endothelin-like. A disordered region spans residues 166–204 (GASRTPETPDKEAGKPAGRATGGLHPRRLKSRTDKARRL).

This sequence belongs to the endothelin/sarafotoxin family.

The protein resides in the secreted. In terms of biological role, endothelins are endothelium-derived vasoconstrictor peptides. This is Endothelin-3 (EDN3) from Sus scrofa (Pig).